A 359-amino-acid chain; its full sequence is Type-1 angiotensin II receptor A (359 aa).

Over 1–25 the chain is Extracellular; sequence MALNSSAEDGIKRIQDDCPKAGRHS. An N-linked (GlcNAc...) asparagine glycan is attached at N4. Angiotensin II contacts are provided by Q15 and D17. 2 cysteine pairs are disulfide-bonded: C18–C274 and C101–C180. A helical transmembrane segment spans residues 26–55; the sequence is YIFVMIPTLYSIIFVVGIFGNSLVVIVIYF. Residues 56-61 are Cytoplasmic-facing; sequence YMKLKT. A helical transmembrane segment spans residues 62-89; sequence VASVFLLNLALADLCFLLTLPLWAVYTA. Over 90–98 the chain is Extracellular; sequence MEYRWPFGN. The helical transmembrane segment at 99 to 125 threads the bilayer; that stretch reads HLCKIASASVSFNLYASVFLLTCLSID. Topologically, residues 126–141 are cytoplasmic; sequence RYLAIVHPMKSRLRRT. Residues 142 to 165 traverse the membrane as a helical segment; it reads MLVAKVTCIIIWLMAGLASLPAVI. The Extracellular portion of the chain corresponds to 166–190; the sequence is HRNVYFIENTNITVCAFHYESRNST. R167 is an angiotensin II binding site. N176 carries N-linked (GlcNAc...) asparagine glycosylation. Angiotensin II-binding residues include F182, H183, and Y184. N-linked (GlcNAc...) asparagine glycosylation is present at N188. The helical transmembrane segment at 191 to 216 threads the bilayer; sequence LPIGLGLTKNILGFLFPFLIILTSYT. K199 contributes to the angiotensin II binding site. Topologically, residues 217–239 are cytoplasmic; sequence LIWKALKKAYEIQKNKPRNDDIF. A helical transmembrane segment spans residues 240–268; sequence RIIMAIVLFFFFSWVPHQIFTFLDVLIQL. The Extracellular segment spans residues 269–278; the sequence is GVIHDCKISD. The chain crosses the membrane as a helical span at residues 279–304; it reads IVDTAMPITICIAYFNNCLNPLFYGF. The Cytoplasmic portion of the chain corresponds to 305–359; sequence LGKKFKKYFLQLLKYIPPKAKSHSSLSTKMSTLSYRPSDNMSSSAKKPASCFEVE. Over residues 337-349 the composition is skewed to polar residues; sequence LSYRPSDNMSSSA. The tract at residues 337 to 359 is disordered; that stretch reads LSYRPSDNMSSSAKKPASCFEVE. C355 carries the S-palmitoyl cysteine lipid modification.

Belongs to the G-protein coupled receptor 1 family. In terms of assembly, interacts with MAS1. Interacts with ARRB1. Interacts with FLNA (via filamin repeat 21); increases PKA-mediated phosphorylation of FLNA. C-terminal Ser or Thr residues may be phosphorylated. In terms of tissue distribution, is expressed in the liver, kidney, aorta, lung, uterus, ovary, spleen, heart, adrenal gland, and vascular smooth muscle cell.

It localises to the cell membrane. Functionally, receptor for angiotensin II, a vasoconstricting peptide, which acts as a key regulator of blood pressure and sodium retention by the kidney. The activated receptor in turn couples to G-alpha proteins G(q) (GNAQ, GNA11, GNA14 or GNA15) and thus activates phospholipase C and increases the cytosolic Ca(2+) concentrations, which in turn triggers cellular responses such as stimulation of protein kinase C. The chain is Type-1 angiotensin II receptor A (Agtr1) from Rattus norvegicus (Rat).